The primary structure comprises 118 residues: Small ribosomal subunit protein uS13 (118 aa).

The segment at 94-118 (SLPLRGQRTKTNARTRKGPRKPIKK) is disordered.

It belongs to the universal ribosomal protein uS13 family. As to quaternary structure, part of the 30S ribosomal subunit. Forms a loose heterodimer with protein S19. Forms two bridges to the 50S subunit in the 70S ribosome.

Functionally, located at the top of the head of the 30S subunit, it contacts several helices of the 16S rRNA. In the 70S ribosome it contacts the 23S rRNA (bridge B1a) and protein L5 of the 50S subunit (bridge B1b), connecting the 2 subunits; these bridges are implicated in subunit movement. Contacts the tRNAs in the A and P-sites. The chain is Small ribosomal subunit protein uS13 from Shewanella amazonensis (strain ATCC BAA-1098 / SB2B).